Reading from the N-terminus, the 591-residue chain is BRCA1-associated protein (591 aa).

S52 carries the post-translational modification Phosphoserine. The span at 82–93 (DEVRDTVEEKKP) shows a compositional bias: basic and acidic residues. The segment at 82–124 (DEVRDTVEEKKPSAAPVSAQRSREQSESVNTAPESPSKQLPDQ) is disordered. Residues 108–124 (ESVNTAPESPSKQLPDQ) are compositionally biased toward polar residues. A phosphoserine mark is found at S116 and S118. The RING-type zinc-finger motif lies at 263–303 (CTVCLERMDESVNGILTTLCNHSFHSQCLQRWDDTTCPVCR). Residues 300–392 (PVCRYCQTPE…GKIVQYECEG (93 aa)) form a UBP-type; degenerate zinc finger. Zn(2+) contacts are provided by C316, C319, C328, C331, C336, H343, H347, and H353. The stretch at 430–536 (EKDTAEEINN…EIQEQLRDVM (107 aa)) forms a coiled coil. Residues 563–591 (IAMASAPNPPSSGAGGKLQSRKGRSKRGK) form a disordered region. The segment covering 581–591 (QSRKGRSKRGK) has biased composition (basic residues).

Interacts with the nuclear localization signal of BRCA1 and with the N-terminal of KSR1. The C-terminal portion of BRCA1 interacts with DDB1. Isoform 2 is highly expressed in testis, lower levels in brain, heart, lung, stomach, colon, uterus, liver and kidney. Isoform 1 is only expressed in the testis. Isoform 2 is predominant over isoform 1 in both fetal and adult testis.

Its subcellular location is the cytoplasm. It catalyses the reaction S-ubiquitinyl-[E2 ubiquitin-conjugating enzyme]-L-cysteine + [acceptor protein]-L-lysine = [E2 ubiquitin-conjugating enzyme]-L-cysteine + N(6)-ubiquitinyl-[acceptor protein]-L-lysine.. It functions in the pathway protein modification; protein ubiquitination. Its function is as follows. Negatively regulates MAP kinase activation by limiting the formation of Raf/MEK complexes probably by inactivation of the KSR1 scaffold protein. Also acts as a Ras responsive E3 ubiquitin ligase that, on activation of Ras, is modified by auto-polyubiquitination resulting in the release of inhibition of Raf/MEK complex formation. May also act as a cytoplasmic retention protein with a role in regulating nuclear transport. The polypeptide is BRCA1-associated protein (Mus musculus (Mouse)).